The sequence spans 692 residues: Sulfhydryl oxidase 2 (692 aa).

The signal sequence occupies residues 1–38 (MAAARAVARDPGAYARQPPSLRAARLPRLLFLLAVVAA). Positions 54–172 (SDAVWLLDSG…RQTMIDFLQN (119 aa)) constitute a Thioredoxin domain. A glycan (N-linked (GlcNAc...) asparagine) is linked at Asn-71. Residues Cys-85 and Cys-88 each act as nucleophile in the active site. 2 cysteine pairs are disulfide-bonded: Cys-85–Cys-88 and Cys-116–Cys-125. Asn-172, Asn-212, and Asn-260 each carry an N-linked (GlcNAc...) asparagine glycan. A disulfide bridge links Cys-412 with Cys-424. The ERV/ALR sulfhydryl oxidase domain maps to 415–524 (SRLELRGYPC…EDPKFPKVPW (110 aa)). Residues Arg-420, Trp-427, His-431, Glu-472, His-476, 499–506 (WRKHNMVN), Lys-521, and Trp-524 each bind FAD. Cysteines 470 and 473 form a disulfide. The cysteines at positions 530 and 533 are disulfide-linked. Residues 568-607 (DQGSPGEWEAQGREQEEGKGLNPSGKSWRHHDTGSLRPPH) are disordered. Over residues 577–586 (AQGREQEEGK) the composition is skewed to basic and acidic residues. A helical membrane pass occupies residues 656 to 676 (SLCVVLYVASSLFLMIMYFFF).

It belongs to the quiescin-sulfhydryl oxidase (QSOX) family. FAD is required as a cofactor.

It localises to the membrane. It carries out the reaction 2 R'C(R)SH + O2 = R'C(R)S-S(R)CR' + H2O2. In terms of biological role, catalyzes the oxidation of sulfhydryl groups in peptide and protein thiols to disulfides with the reduction of oxygen to hydrogen peroxide. May contribute to disulfide bond formation in a variety of secreted proteins. The chain is Sulfhydryl oxidase 2 (Qsox2) from Mus musculus (Mouse).